Here is a 297-residue protein sequence, read N- to C-terminus: Protoheme IX farnesyltransferase (297 aa).

The next 9 membrane-spanning stretches (helical) occupy residues 16-36 (VVAL…PGVP), 45-65 (VLGF…NQLL), 93-113 (VFAS…VNLI), 114-134 (TAVL…VYLK), 141-161 (IVIG…AVTG), 172-192 (SLLV…LAIF), 223-243 (VVLA…AFYL), 244-264 (GGAI…LDPP), and 277-297 (IVYL…LPWL).

The protein belongs to the UbiA prenyltransferase family. Protoheme IX farnesyltransferase subfamily.

It localises to the cell inner membrane. The enzyme catalyses heme b + (2E,6E)-farnesyl diphosphate + H2O = Fe(II)-heme o + diphosphate. Its pathway is porphyrin-containing compound metabolism; heme O biosynthesis; heme O from protoheme: step 1/1. In terms of biological role, converts heme B (protoheme IX) to heme O by substitution of the vinyl group on carbon 2 of heme B porphyrin ring with a hydroxyethyl farnesyl side group. This is Protoheme IX farnesyltransferase from Stenotrophomonas maltophilia (strain R551-3).